A 244-amino-acid polypeptide reads, in one-letter code: tRNA (cytidine/uridine-2'-O-)-methyltransferase TrmJ (244 aa).

S-adenosyl-L-methionine is bound by residues 79–81 (TSA), Gly114, Ile134, and 141–143 (SSL).

Belongs to the class IV-like SAM-binding methyltransferase superfamily. RNA methyltransferase TrmH family. As to quaternary structure, homodimer.

The protein resides in the cytoplasm. The enzyme catalyses cytidine(32) in tRNA + S-adenosyl-L-methionine = 2'-O-methylcytidine(32) in tRNA + S-adenosyl-L-homocysteine + H(+). The catalysed reaction is uridine(32) in tRNA + S-adenosyl-L-methionine = 2'-O-methyluridine(32) in tRNA + S-adenosyl-L-homocysteine + H(+). Catalyzes the formation of 2'O-methylated cytidine (Cm32) or 2'O-methylated uridine (Um32) at position 32 in tRNA. The sequence is that of tRNA (cytidine/uridine-2'-O-)-methyltransferase TrmJ (trmJ) from Klebsiella pneumoniae subsp. pneumoniae (strain ATCC 700721 / MGH 78578).